The primary structure comprises 443 residues: Threonine/serine transporter TdcC (443 aa).

A run of 11 helical transmembrane segments spans residues 22–42 (TTWTLGLFGTAIGAGVLFFPI), 44–64 (AGFGGLIPILLMLVLAYPIAF), 97–117 (GVVITFLYFFAICPLLWIYGV), 140–160 (FVALFLLLLMAFVIWFGKDLM), 163–183 (VMSFLVFPFIASLILISLSLI), 207–227 (ILVTVWLGISIMVFSFNFSPI), 259–279 (ASLLMVAVVMFFAFSCLFTLS), 319–339 (ASIIALVAIFKSFFGHYLGTL), 366–386 (ISMIFIMGSTWVVAYANPNIL), 389–409 (IEAMGAPIIASLLCLLPMFAI), and 423–443 (ENLFVTAVGLLTILNIVYKLF).

This sequence belongs to the amino acid/polyamine transporter 2 family. SdaC/TdcC subfamily.

It localises to the cell inner membrane. It carries out the reaction L-threonine(in) + H(+)(in) = L-threonine(out) + H(+)(out). It catalyses the reaction L-serine(in) + H(+)(in) = L-serine(out) + H(+)(out). Functionally, involved in the import of threonine and serine into the cell, with the concomitant import of a proton (symport system). The chain is Threonine/serine transporter TdcC from Enterobacter sp. (strain 638).